The following is a 130-amino-acid chain: Peptide methionine sulfoxide reductase MsrB (130 aa).

The region spanning 1-122 is the MsrB domain; it reads MKKREDMTEM…NSVSMAFEDS (122 aa). Zn(2+) contacts are provided by Cys39, Cys42, Cys88, and Cys91. The active-site Nucleophile is Cys111.

It belongs to the MsrB Met sulfoxide reductase family. Requires Zn(2+) as cofactor.

It catalyses the reaction L-methionyl-[protein] + [thioredoxin]-disulfide + H2O = L-methionyl-(R)-S-oxide-[protein] + [thioredoxin]-dithiol. This Pasteurella multocida (strain Pm70) protein is Peptide methionine sulfoxide reductase MsrB.